A 364-amino-acid chain; its full sequence is Dual-specificity RNA methyltransferase RlmN (364 aa).

Glutamate 91 (proton acceptor) is an active-site residue. In terms of domain architecture, Radical SAM core spans 97 to 333 (ESDRGTLCIS…VTVRKTRGDD (237 aa)). Cysteine 104 and cysteine 338 form a disulfide bridge. Residues cysteine 111, cysteine 115, and cysteine 118 each contribute to the [4Fe-4S] cluster site. S-adenosyl-L-methionine-binding positions include 164–165 (GE), serine 196, 218–220 (SLH), and asparagine 295. Cysteine 338 (S-methylcysteine intermediate) is an active-site residue.

It belongs to the radical SAM superfamily. RlmN family. Requires [4Fe-4S] cluster as cofactor.

The protein resides in the cytoplasm. It carries out the reaction adenosine(2503) in 23S rRNA + 2 reduced [2Fe-2S]-[ferredoxin] + 2 S-adenosyl-L-methionine = 2-methyladenosine(2503) in 23S rRNA + 5'-deoxyadenosine + L-methionine + 2 oxidized [2Fe-2S]-[ferredoxin] + S-adenosyl-L-homocysteine. The enzyme catalyses adenosine(37) in tRNA + 2 reduced [2Fe-2S]-[ferredoxin] + 2 S-adenosyl-L-methionine = 2-methyladenosine(37) in tRNA + 5'-deoxyadenosine + L-methionine + 2 oxidized [2Fe-2S]-[ferredoxin] + S-adenosyl-L-homocysteine. Its function is as follows. Specifically methylates position 2 of adenine 2503 in 23S rRNA and position 2 of adenine 37 in tRNAs. m2A2503 modification seems to play a crucial role in the proofreading step occurring at the peptidyl transferase center and thus would serve to optimize ribosomal fidelity. This is Dual-specificity RNA methyltransferase RlmN from Neisseria meningitidis serogroup C (strain 053442).